The following is a 249-amino-acid chain: Pleckstrin homology domain-containing family F member 2 (249 aa).

Residues 35–131 form the PH domain; the sequence is VLIGEGVLTK…WMNHINKCVS (97 aa). An FYVE-type zinc finger spans residues 152–212; it reads DSEATVCMRC…ICDSCYDLLS (61 aa). Zn(2+) contacts are provided by Cys158, Cys161, Cys175, Cys178, Cys183, Cys186, Cys204, and Cys207. The span at 219–232 shows a compositional bias: polar residues; that stretch reads CQSTRSDSYSQSPK. A disordered region spans residues 219–249; that stretch reads CQSTRSDSYSQSPKSSLNDASDDDDDEDSSD. A compositionally biased stretch (acidic residues) spans 238–249; the sequence is ASDDDDDEDSSD.

It localises to the early endosome membrane. The protein resides in the endoplasmic reticulum. Functionally, may play a role in early endosome fusion upstream of RAB5, hence regulating receptor trafficking and fluid-phase transport. Enhances cellular sensitivity to TNF-induced apoptosis. This chain is Pleckstrin homology domain-containing family F member 2 (PLEKHF2), found in Gallus gallus (Chicken).